Here is a 547-residue protein sequence, read N- to C-terminus: TBCC domain-containing protein 1 (547 aa).

A C-CAP/cofactor C-like domain is found at 304-435; the sequence is PHTHRMVVMS…LEDHMAHTGL (132 aa).

It belongs to the TBCC family.

The protein localises to the cytoplasm. Its subcellular location is the cytoskeleton. It localises to the microtubule organizing center. The protein resides in the centrosome. It is found in the spindle pole. May play a role in the regulation of centrosome and Golgi apparatus positioning. In Xenopus tropicalis (Western clawed frog), this protein is TBCC domain-containing protein 1 (tbccd1).